Here is a 371-residue protein sequence, read N- to C-terminus: Regulatory protein RapK (371 aa).

TPR repeat units follow at residues 7–42 (EVVA…FDEM), 93–130 (EYNF…IPDE), 175–208 (ATST…AKET), 215–248 (AQLF…ESWL), 254–290 (INSL…MENK), and 331–364 (DELS…EQKM).

This sequence belongs to the Rap family.

Its subcellular location is the cytoplasm. Inhibited by PhrK, which prevents RapK-ComA interaction. Involved in the regulation of genetic competence development. Inhibits the activity of ComA, a transcriptional factor that regulates the development of genetic competence. Likely affects the activity of additional regulators, in particular Spo0A. The sequence is that of Regulatory protein RapK (rapK) from Bacillus subtilis (strain 168).